The sequence spans 306 residues: Protoheme IX farnesyltransferase (306 aa).

The next 9 helical transmembrane spans lie at 32-52 (VVQL…PGMP), 57-77 (WALM…AAAF), 108-128 (LLFS…WVNP), 129-149 (LTMW…TVIL), 157-177 (IVIG…AMTG), 183-203 (ALIL…ALAL), 230-250 (VFLY…YGMS), 252-272 (WIYL…GFRL), and 285-305 (FRFS…DHYL).

Belongs to the UbiA prenyltransferase family. Protoheme IX farnesyltransferase subfamily.

It localises to the cell inner membrane. It catalyses the reaction heme b + (2E,6E)-farnesyl diphosphate + H2O = Fe(II)-heme o + diphosphate. It participates in porphyrin-containing compound metabolism; heme O biosynthesis; heme O from protoheme: step 1/1. Functionally, converts heme B (protoheme IX) to heme O by substitution of the vinyl group on carbon 2 of heme B porphyrin ring with a hydroxyethyl farnesyl side group. The protein is Protoheme IX farnesyltransferase of Acidovorax ebreus (strain TPSY) (Diaphorobacter sp. (strain TPSY)).